The following is a 154-amino-acid chain: SKP1-like protein 13 (154 aa).

The interval 96-154 (MLAANYLNIKDLLDLGCQTVADMITGKKPDEIRALLGIENDFTPEEEEEIRKENQWAFE) is interaction with the F-box domain of F-box proteins.

The protein belongs to the SKP1 family. In terms of assembly, part of a SCF (SKP1-cullin-F-box) protein ligase complex. Interacts with ADO3/FKF1, EBF1, PP2A13, SKIP15, SKIP16, CPR1/CPR30, At1g55000, At3g61590, At1g67340, At1g78100, At3g04660, At4g38940, At4g39550 and At5g49610. Mostly expressed in inflorescences, and, to a lower extent, in seedlings and siliques. Also detected in cotyledons, leaves, pollen and seeds.

The protein resides in the nucleus. It participates in protein modification; protein ubiquitination. Involved in ubiquitination and subsequent proteasomal degradation of target proteins. Together with CUL1, RBX1 and a F-box protein, it forms a SCF E3 ubiquitin ligase complex. The functional specificity of this complex depends on the type of F-box protein. In the SCF complex, it serves as an adapter that links the F-box protein to CUL1. In Arabidopsis thaliana (Mouse-ear cress), this protein is SKP1-like protein 13 (ASK13).